A 553-amino-acid polypeptide reads, in one-letter code: Putative transport protein YidE (553 aa).

5 helical membrane passes run 4-24, 28-48, 65-85, 95-115, and 158-178; these read IALT…IGNI, GVGF…HFVD, FGLI…FFAS, LFAV…HKIF, and MSYA…MWLM. RCK C-terminal domains lie at 192–276 and 279–361; these read KHES…VIGK and DTSL…VVGN. A run of 6 helical transmembrane segments spans residues 371–391, 393–413, 437–457, 464–484, 493–513, and 533–553; these read MLPV…PLFV, GFPV…ALIL, LGIV…FVDT, LSWI…VGLL, YLTL…LAFA, and LVMF…WGMG.

It belongs to the AAE transporter (TC 2.A.81) family. YidE subfamily.

Its subcellular location is the cell membrane. This Salmonella newport (strain SL254) protein is Putative transport protein YidE.